The chain runs to 525 residues: Chromosomal replication initiator protein DnaA (525 aa).

The domain I, interacts with DnaA modulators stretch occupies residues 1 to 71 (MNDFWQHCSA…SDLARDFWNA (71 aa)). The tract at residues 71–188 (APIEVQFVLD…GEADSMYERS (118 aa)) is domain II. Residues 160 to 182 (AAAGRRTWRPGPGAAPANGGEAD) form a disordered region. Positions 169 to 181 (PGPGAAPANGGEA) are enriched in low complexity. The tract at residues 189–405 (KLNPVLTFDN…GALRKILAYS (217 aa)) is domain III, AAA+ region. ATP-binding residues include Gly-233, Gly-235, Lys-236, and Thr-237. Residues 406-525 (KFHGREISIE…LHVLEQTLKG (120 aa)) form a domain IV, binds dsDNA region.

This sequence belongs to the DnaA family. As to quaternary structure, oligomerizes as a right-handed, spiral filament on DNA at oriC.

The protein resides in the cytoplasm. In terms of biological role, plays an essential role in the initiation and regulation of chromosomal replication. ATP-DnaA binds to the origin of replication (oriC) to initiate formation of the DNA replication initiation complex once per cell cycle. Binds the DnaA box (a 9 base pair repeat at the origin) and separates the double-stranded (ds)DNA. Forms a right-handed helical filament on oriC DNA; dsDNA binds to the exterior of the filament while single-stranded (ss)DNA is stabiized in the filament's interior. The ATP-DnaA-oriC complex binds and stabilizes one strand of the AT-rich DNA unwinding element (DUE), permitting loading of DNA polymerase. After initiation quickly degrades to an ADP-DnaA complex that is not apt for DNA replication. Binds acidic phospholipids. This chain is Chromosomal replication initiator protein DnaA, found in Burkholderia ambifaria (strain ATCC BAA-244 / DSM 16087 / CCUG 44356 / LMG 19182 / AMMD) (Burkholderia cepacia (strain AMMD)).